A 101-amino-acid chain; its full sequence is MSENCGPTDAHADHDDSHGGMGCAEVIAEVWTLLDGECTPETRERLRRHLEACPGCLRHYGLEERIKALIGTKCRGDRAPEGLRERLRLEIRRTTIIRGGP.

Residues 9 to 15 are inhibits SigH sigma factor activity; sequence DAHADHD. Residue Cys23 coordinates iron-sulfur cluster. Inhibits SigH sigma factor activity regions lie at residues 28–34 and 38–44; these read AEVWTLL and CTPETRE. Positions 49, 53, and 56 each coordinate iron-sulfur cluster. At Thr94 the chain carries Phosphothreonine.

This sequence belongs to the zinc-associated anti-sigma factor (ZAS) superfamily. In terms of assembly, interacts with cognate sigma factor SigH under reducing conditions. Binding inhibits the interaction of SigH with the RNA polymerase catalytic core. The cofactor is iron-sulfur cluster. Phosphorylated, probably by PknB. Phosphorylation decreases interaction with SigH, leading to increased SigH-mediated transcription.

Its function is as follows. An redox-regulated anti-sigma factor for extracytoplasmic function (ECF) sigma factor SigH. ECF sigma factors are held in an inactive form by a cognate anti-sigma factor. RshA and some peptides derived from it inhibit the sigma factor activity of SigH. Probably releases SigH during oxidative stress. The protein is Anti-sigma factor RshA (rshA) of Mycobacterium tuberculosis (strain CDC 1551 / Oshkosh).